The primary structure comprises 526 residues: Adenylosuccinate synthetase (526 aa).

GTP-binding positions include 102 to 108 and 130 to 132; these read GDEGKGK and GHT. Residue Asp103 is the Proton acceptor of the active site. Mg(2+) is bound by residues Asp103 and Gly130. Residues 103–106, 128–131, Thr219, Arg233, Asn310, Thr325, and Arg392 contribute to the IMP site; these read DEGK and NAGH. Catalysis depends on His131, which acts as the Proton donor. 388–394 provides a ligand contact to substrate; that stretch reads TTTGRTR. Residues Arg394, 420–422, and 502–504 each bind GTP; these read KVD and GVG.

The protein belongs to the adenylosuccinate synthetase family. Homodimer. It depends on Mg(2+) as a cofactor.

The protein localises to the cytoplasm. It catalyses the reaction IMP + L-aspartate + GTP = N(6)-(1,2-dicarboxyethyl)-AMP + GDP + phosphate + 2 H(+). The protein operates within purine metabolism; AMP biosynthesis via de novo pathway; AMP from IMP: step 1/2. Functionally, plays an important role in the de novo pathway and in the salvage pathway of purine nucleotide biosynthesis. Catalyzes the first committed step in the biosynthesis of AMP from IMP. The sequence is that of Adenylosuccinate synthetase from Phaeodactylum tricornutum (strain CCAP 1055/1).